We begin with the raw amino-acid sequence, 668 residues long: Myb-like protein W (668 aa).

6 disordered regions span residues 57 to 124 (LDQF…NESV), 246 to 357 (EKEK…EEEV), 403 to 432 (KPKSKLKSSSKPGIPTSPITMKTNPHTDKG), 497 to 546 (YTNT…NKER), 561 to 583 (SMGRFSAKPPPIKTTTTTTTTTS), and 631 to 668 (QCEERKKKEDRDVDEDGEDDYYFGGDNSKNGDDDDEII). Residues 69 to 121 (NNNNNNNSNNNNNNNNNNNNNNNNNNNNNNNNNNNNNNNNNNYNNYNNNNNNN) are compositionally biased toward low complexity. Residues 246–268 (EKEKRKKEREEREEREKQEKQEQ) are compositionally biased toward basic and acidic residues. Low complexity predominate over residues 293-307 (NNKDNNHNGYYYYYD). Acidic residues predominate over residues 308–318 (NDNDNYNDGDD). The span at 319-335 (EKEKEKEKEKEKEKENE) shows a compositional bias: basic and acidic residues. In terms of domain architecture, Myb-like spans 344 to 398 (TSMVNSEEWTEEEVNKMNEIRGKLSTADYNYWDKVSAHVKSKTAEQCQRKYNSRF). A compositionally biased stretch (low complexity) spans 501–542 (NNNNNNNNNNNNNNNNNNNNNNNNNNNNNNNNNNNNNNNNNN). The span at 632 to 641 (CEERKKKEDR) shows a compositional bias: basic and acidic residues. A compositionally biased stretch (acidic residues) spans 642–651 (DVDEDGEDDY).

This is Myb-like protein W (mybW) from Dictyostelium discoideum (Social amoeba).